The primary structure comprises 134 residues: Translation initiation factor 2 subunit beta (134 aa).

Belongs to the eIF-2-beta/eIF-5 family. In terms of assembly, heterotrimer composed of an alpha, a beta and a gamma chain.

Functionally, eIF-2 functions in the early steps of protein synthesis by forming a ternary complex with GTP and initiator tRNA. This Pyrobaculum calidifontis (strain DSM 21063 / JCM 11548 / VA1) protein is Translation initiation factor 2 subunit beta.